We begin with the raw amino-acid sequence, 367 residues long: Pentatricopeptide repeat-containing protein At1g11900 (367 aa).

PPR repeat units lie at residues Ser-69–Leu-103, Pro-104–Pro-139, Ser-141–Tyr-175, Arg-176–Pro-210, Asp-211–Asp-241, Asn-247–Pro-281, Asp-282–Pro-316, and Ser-317–Thr-347.

The protein belongs to the PPR family. P subfamily.

In Arabidopsis thaliana (Mouse-ear cress), this protein is Pentatricopeptide repeat-containing protein At1g11900.